The primary structure comprises 827 residues: Periplasmic nitrate reductase (827 aa).

The tat-type signal signal peptide spans 1 to 34 (MSLTRRDFIKANAVAATAAAAGIATPAIAQPAKA). In terms of domain architecture, 4Fe-4S Mo/W bis-MGD-type spans 36–92 (IRWDKGVCRFCGTGCAVLVGVQDGRVVATQGDPDSPVNRGLNCIKGYFLSKIMYGED). [4Fe-4S] cluster is bound by residues C43, C46, C50, and C78. Mo-bis(molybdopterin guanine dinucleotide) is bound by residues K80, Q148, N173, C177, 210 to 217 (WGSNMAEM), 241 to 245 (STFEH), 260 to 262 (QTD), M371, Q375, N481, 507 to 508 (SD), K530, D557, and 717 to 726 (TGRVLEHWHS). Residue F793 participates in substrate binding. Positions 801 and 818 each coordinate Mo-bis(molybdopterin guanine dinucleotide).

This sequence belongs to the prokaryotic molybdopterin-containing oxidoreductase family. NasA/NapA/NarB subfamily. Component of the periplasmic nitrate reductase NapAB complex composed of NapA and NapB. [4Fe-4S] cluster is required as a cofactor. Mo-bis(molybdopterin guanine dinucleotide) serves as cofactor. Predicted to be exported by the Tat system. The position of the signal peptide cleavage has not been experimentally proven.

It localises to the periplasm. The enzyme catalyses 2 Fe(II)-[cytochrome] + nitrate + 2 H(+) = 2 Fe(III)-[cytochrome] + nitrite + H2O. Catalytic subunit of the periplasmic nitrate reductase complex NapAB. Receives electrons from NapB and catalyzes the reduction of nitrate to nitrite. This Paramagnetospirillum magneticum (strain ATCC 700264 / AMB-1) (Magnetospirillum magneticum) protein is Periplasmic nitrate reductase.